Reading from the N-terminus, the 432-residue chain is Phosphomethylpyrimidine synthase (432 aa).

Residues Asn66, Met95, Tyr124, His163, 185-187 (SRG), 226-229 (DGLR), and Glu265 each bind substrate. His269 contributes to the Zn(2+) binding site. Tyr292 serves as a coordination point for substrate. His333 contributes to the Zn(2+) binding site. The [4Fe-4S] cluster site is built by Cys409, Cys412, and Cys416.

Belongs to the ThiC family. [4Fe-4S] cluster is required as a cofactor.

It catalyses the reaction 5-amino-1-(5-phospho-beta-D-ribosyl)imidazole + S-adenosyl-L-methionine = 4-amino-2-methyl-5-(phosphooxymethyl)pyrimidine + CO + 5'-deoxyadenosine + formate + L-methionine + 3 H(+). Its pathway is cofactor biosynthesis; thiamine diphosphate biosynthesis. Catalyzes the synthesis of the hydroxymethylpyrimidine phosphate (HMP-P) moiety of thiamine from aminoimidazole ribotide (AIR) in a radical S-adenosyl-L-methionine (SAM)-dependent reaction. This chain is Phosphomethylpyrimidine synthase, found in Thermoanaerobacter sp. (strain X514).